Reading from the N-terminus, the 204-residue chain is VEL1-related protein AC977.05c (204 aa).

An N-terminal signal peptide occupies residues 1-17 (MIFKNLISLFFIGLATA).

Belongs to the VEL1 family.

Its subcellular location is the cytoplasm. The protein localises to the cytosol. This chain is VEL1-related protein AC977.05c, found in Schizosaccharomyces pombe (strain 972 / ATCC 24843) (Fission yeast).